A 594-amino-acid polypeptide reads, in one-letter code: Spindle pole body-associated protein CIK1 (594 aa).

Residues M1 to K29 are disordered. A coiled-coil region spans residues I81–E360.

As to quaternary structure, interacts with KAR3; the interaction is direct.

The protein resides in the nucleus. It localises to the cytoplasm. The protein localises to the cytoskeleton. It is found in the microtubule organizing center. Its subcellular location is the spindle pole body. The protein resides in the spindle. Its function is as follows. Together with the minus end-directed microtubule motor KAR3, involved in spindle midzone assembly, karyogamy (nuclear fusion) during mating, and with an essential function in meiosis I. To contribute to spindle midzone assembly during mitotic metaphase, the KAR3-CIK1 motor cross-links anti-parallel microtubules to align them on the spindle axis; as the motor travels polewards splayed microtubules are pulled into alignment. During the karyogamy (nuclear fusion) step of mating, KAR3-CIK1 cross-links antiparallel cytoplasmic microtubules emanating from the spindle pole bodies of mating partners; the motor activity of KAR3 creates the force that pulls the nuclei together by sliding cross-linked microtubules past one another. KAR3-CIK1 promotes microtubule shortening predominantly from the microtubule plus-end. Required for interhomolog recombination, synapsis of homologous chromosomes and establishment of a meiosis I spindle. The chain is Spindle pole body-associated protein CIK1 (CIK1) from Saccharomyces cerevisiae (strain ATCC 204508 / S288c) (Baker's yeast).